Here is a 360-residue protein sequence, read N- to C-terminus: Peptide chain release factor 1 (360 aa).

Position 237 is an N5-methylglutamine (Q237).

Belongs to the prokaryotic/mitochondrial release factor family. Methylated by PrmC. Methylation increases the termination efficiency of RF1.

It is found in the cytoplasm. Peptide chain release factor 1 directs the termination of translation in response to the peptide chain termination codons UAG and UAA. The sequence is that of Peptide chain release factor 1 from Stutzerimonas stutzeri (strain A1501) (Pseudomonas stutzeri).